A 163-amino-acid chain; its full sequence is MTHWITLLAVEKVAKEGGLFDLDATLPLMAIQFLLLALILNATLYKPLGKAIDGRNEYVRNNQLEAQERLSKAEKLAEAYEQELAGARRQAQTIIADAQAEAQKIAAEKVAAAQKEAQAQREQAAGEIEQQKQQALASLEQQVDALSRQILEKLLGADLVKQR.

A helical membrane pass occupies residues 28-45 (LMAIQFLLLALILNATLY).

It belongs to the ATPase B chain family. F-type ATPases have 2 components, F(1) - the catalytic core - and F(0) - the membrane proton channel. F(1) has five subunits: alpha(3), beta(3), gamma(1), delta(1), epsilon(1). F(0) has four main subunits: a(1), b(1), b'(1) and c(10-14). The alpha and beta chains form an alternating ring which encloses part of the gamma chain. F(1) is attached to F(0) by a central stalk formed by the gamma and epsilon chains, while a peripheral stalk is formed by the delta, b and b' chains.

It localises to the cellular thylakoid membrane. Functionally, f(1)F(0) ATP synthase produces ATP from ADP in the presence of a proton or sodium gradient. F-type ATPases consist of two structural domains, F(1) containing the extramembraneous catalytic core and F(0) containing the membrane proton channel, linked together by a central stalk and a peripheral stalk. During catalysis, ATP synthesis in the catalytic domain of F(1) is coupled via a rotary mechanism of the central stalk subunits to proton translocation. Its function is as follows. Component of the F(0) channel, it forms part of the peripheral stalk, linking F(1) to F(0). The b'-subunit is a diverged and duplicated form of b found in plants and photosynthetic bacteria. This chain is ATP synthase subunit b', found in Nostoc sp. (strain PCC 7120 / SAG 25.82 / UTEX 2576).